Consider the following 250-residue polypeptide: Probable transcriptional regulatory protein MAP_1030 (250 aa).

It belongs to the TACO1 family.

It localises to the cytoplasm. This chain is Probable transcriptional regulatory protein MAP_1030, found in Mycolicibacterium paratuberculosis (strain ATCC BAA-968 / K-10) (Mycobacterium paratuberculosis).